Reading from the N-terminus, the 463-residue chain is A-type ATP synthase subunit B (463 aa).

Belongs to the ATPase alpha/beta chains family. In terms of assembly, has multiple subunits with at least A(3), B(3), C, D, E, F, H, I and proteolipid K(x).

The protein localises to the cell membrane. Functionally, component of the A-type ATP synthase that produces ATP from ADP in the presence of a proton gradient across the membrane. The B chain is a regulatory subunit. The polypeptide is A-type ATP synthase subunit B (Methanothrix thermoacetophila (strain DSM 6194 / JCM 14653 / NBRC 101360 / PT) (Methanosaeta thermophila)).